Here is a 176-residue protein sequence, read N- to C-terminus: Inner membrane-spanning protein YciB (176 aa).

5 helical membrane-spanning segments follow: residues 3–23, 49–69, 72–92, 118–138, and 149–169; these read FLFDLFPIILFFAAFKLWGIF, TMLWVSLGVIVVFGGATLVLH, KFIQWKPTVLYWLFAVGLVAA, KLNLAWAAFFAALGVTNLYVV, and FKLFGTTGAIIVFVILQSLWL.

The protein belongs to the YciB family.

It is found in the cell inner membrane. In terms of biological role, plays a role in cell envelope biogenesis, maintenance of cell envelope integrity and membrane homeostasis. This is Inner membrane-spanning protein YciB from Burkholderia thailandensis (strain ATCC 700388 / DSM 13276 / CCUG 48851 / CIP 106301 / E264).